Here is a 338-residue protein sequence, read N- to C-terminus: MNLQRFPRYPLTFGPTPIQPLKRLSAHLGGKVDLYAKREDCNSGLAFGGNKTRKLEYLVPDALAQGADTLVSIGGVQSNQTRQVAAVAAHLGMKCVLVQEHWVNYEDPVYDRVGNIQLSRMMGADVRLVSDGFDIGIRRSWEEAMESVRQAGGKPYPIPAGCSEHPLGGLGFVGFAEEVRAQEAQLGFKFDYVVVCSVTGSTQAGMVVGFAADGRADRVIGIDASAKPEQTREQITRIARHTAELVELGRDIVEQDVVLDTRYGGPEYGLPSDGTLEAIRLCARLEGMLTDPVYEGKSMHGMIDKVRLGEFEPGSKVLYAHLGGAPALSAYNGIFRNG.

Lys51 is subject to N6-(pyridoxal phosphate)lysine. The active-site Nucleophile is the Ser78.

Belongs to the ACC deaminase/D-cysteine desulfhydrase family. In terms of assembly, homotrimer. Pyridoxal 5'-phosphate serves as cofactor.

The enzyme catalyses 1-aminocyclopropane-1-carboxylate + H2O = 2-oxobutanoate + NH4(+). In terms of biological role, catalyzes a cyclopropane ring-opening reaction, the irreversible conversion of 1-aminocyclopropane-1-carboxylate (ACC) to ammonia and alpha-ketobutyrate. Allows growth on ACC as a nitrogen source. This is 1-aminocyclopropane-1-carboxylate deaminase from Burkholderia cenocepacia (strain HI2424).